Here is a 200-residue protein sequence, read N- to C-terminus: Molybdenum cofactor guanylyltransferase (200 aa).

GTP contacts are provided by residues 10-12 (LAG), Lys-23, Asn-51, Asp-69, and Asp-99. A Mg(2+)-binding site is contributed by Asp-99.

This sequence belongs to the MobA family. As to quaternary structure, monomer. The cofactor is Mg(2+).

The protein localises to the cytoplasm. It catalyses the reaction Mo-molybdopterin + GTP + H(+) = Mo-molybdopterin guanine dinucleotide + diphosphate. Its function is as follows. Transfers a GMP moiety from GTP to Mo-molybdopterin (Mo-MPT) cofactor (Moco or molybdenum cofactor) to form Mo-molybdopterin guanine dinucleotide (Mo-MGD) cofactor. This chain is Molybdenum cofactor guanylyltransferase, found in Shewanella halifaxensis (strain HAW-EB4).